A 537-amino-acid chain; its full sequence is O-phosphoserine--tRNA(Cys) ligase (537 aa).

Residues 186–188, 231–233, 273–274, and N317 each bind substrate; these read HMT, SAS, and YY.

Belongs to the class-II aminoacyl-tRNA synthetase family. O-phosphoseryl-tRNA(Cys) synthetase subfamily. Homotetramer. Interacts with SepCysS.

The catalysed reaction is tRNA(Cys) + O-phospho-L-serine + ATP = O-phospho-L-seryl-tRNA(Cys) + AMP + diphosphate. Functionally, catalyzes the attachment of O-phosphoserine (Sep) to tRNA(Cys). This is O-phosphoserine--tRNA(Cys) ligase from Methanococcus maripaludis (strain DSM 14266 / JCM 13030 / NBRC 101832 / S2 / LL).